The following is a 782-amino-acid chain: E3 ubiquitin-protein ligase SopA (782 aa).

Positions 140-170 are disordered; the sequence is SANNRPTVSEGRTPPVSPSLSLQATSSPSSP. Low complexity predominate over residues 157 to 170; sequence PSLSLQATSSPSSP. Catalysis depends on C753, which acts as the Glycyl thioester intermediate.

This sequence belongs to the SopA E3 ligase family. In terms of processing, ubiquitinated in the presence of host E1 ubiquitin-activating enzyme, E2 ubiquitin-conjugating enzyme and ubiquitin.

Its subcellular location is the secreted. The protein resides in the host cell. It carries out the reaction S-ubiquitinyl-[E2 ubiquitin-conjugating enzyme]-L-cysteine + [acceptor protein]-L-lysine = [E2 ubiquitin-conjugating enzyme]-L-cysteine + N(6)-ubiquitinyl-[acceptor protein]-L-lysine.. Its function is as follows. Effector proteins function to alter host cell physiology and promote bacterial survival in host tissues. This protein is an E3 ubiquitin ligase that interferes with host's ubiquitination pathway. The sequence is that of E3 ubiquitin-protein ligase SopA (sopA) from Salmonella agona (strain SL483).